The following is a 579-amino-acid chain: 2-isopropylmalate synthase (579 aa).

Positions 33–308 (PRWLSTDLRD…DPGIDFSDIN (276 aa)) constitute a Pyruvate carboxyltransferase domain. Residues Asp42, His247, His249, and Asn283 each contribute to the Mg(2+) site. The tract at residues 450-579 (SSDLPVPLAS…IVAPLVAAGR (130 aa)) is regulatory domain.

Belongs to the alpha-IPM synthase/homocitrate synthase family. LeuA type 2 subfamily. In terms of assembly, homodimer. Requires Mg(2+) as cofactor.

The protein resides in the cytoplasm. It carries out the reaction 3-methyl-2-oxobutanoate + acetyl-CoA + H2O = (2S)-2-isopropylmalate + CoA + H(+). It functions in the pathway amino-acid biosynthesis; L-leucine biosynthesis; L-leucine from 3-methyl-2-oxobutanoate: step 1/4. Functionally, catalyzes the condensation of the acetyl group of acetyl-CoA with 3-methyl-2-oxobutanoate (2-ketoisovalerate) to form 3-carboxy-3-hydroxy-4-methylpentanoate (2-isopropylmalate). The sequence is that of 2-isopropylmalate synthase from Streptosporangium roseum (strain ATCC 12428 / DSM 43021 / JCM 3005 / KCTC 9067 / NCIMB 10171 / NRRL 2505 / NI 9100).